Here is a 140-residue protein sequence, read N- to C-terminus: Large ribosomal subunit protein uL11 (140 aa).

This sequence belongs to the universal ribosomal protein uL11 family. As to quaternary structure, part of the ribosomal stalk of the 50S ribosomal subunit. Interacts with L10 and the large rRNA to form the base of the stalk. L10 forms an elongated spine to which L12 dimers bind in a sequential fashion forming a multimeric L10(L12)X complex. In terms of processing, one or more lysine residues are methylated.

Functionally, forms part of the ribosomal stalk which helps the ribosome interact with GTP-bound translation factors. The chain is Large ribosomal subunit protein uL11 from Symbiobacterium thermophilum (strain DSM 24528 / JCM 14929 / IAM 14863 / T).